We begin with the raw amino-acid sequence, 235 residues long: Type II secretion system protein N (235 aa).

The Cytoplasmic portion of the chain corresponds to 1 to 34; that stretch reads MIPRRSSDITIKTRSDVLPFSGASSRWLQRYAPA. A helical; Signal-anchor for type II membrane protein transmembrane segment spans residues 35–55; the sequence is LLAVALIIAMSISLAWQAAGW. Residues 56–235 are Periplasmic-facing; it reads LRLQRSPVAV…EPTTTPTESD (180 aa). The tract at residues 205-235 is disordered; sequence DALRQQMEATPIAEPAEEDSSEPTTTPTESD. The span at 226–235 shows a compositional bias: low complexity; that stretch reads EPTTTPTESD.

It is found in the cell inner membrane. Its function is as follows. Involved in a type II secretion system (T2SS, formerly general secretion pathway, GSP) for the export of proteins. Required for the translocation of a variety of enzymes across the outer membrane. In Pseudomonas aeruginosa (strain ATCC 15692 / DSM 22644 / CIP 104116 / JCM 14847 / LMG 12228 / 1C / PRS 101 / PAO1), this protein is Type II secretion system protein N (xcpP).